A 116-amino-acid chain; its full sequence is Aspartate 1-decarboxylase (116 aa).

Residue Ser-25 is the Schiff-base intermediate with substrate; via pyruvic acid of the active site. Pyruvic acid (Ser) is present on Ser-25. A substrate-binding site is contributed by Thr-57. Residue Tyr-58 is the Proton donor of the active site. 73–75 (GAA) is a binding site for substrate.

This sequence belongs to the PanD family. As to quaternary structure, heterooctamer of four alpha and four beta subunits. It depends on pyruvate as a cofactor. Post-translationally, is synthesized initially as an inactive proenzyme, which is activated by self-cleavage at a specific serine bond to produce a beta-subunit with a hydroxyl group at its C-terminus and an alpha-subunit with a pyruvoyl group at its N-terminus.

The protein resides in the cytoplasm. The catalysed reaction is L-aspartate + H(+) = beta-alanine + CO2. Its pathway is cofactor biosynthesis; (R)-pantothenate biosynthesis; beta-alanine from L-aspartate: step 1/1. Functionally, catalyzes the pyruvoyl-dependent decarboxylation of aspartate to produce beta-alanine. In Leptospira borgpetersenii serovar Hardjo-bovis (strain JB197), this protein is Aspartate 1-decarboxylase.